A 221-amino-acid polypeptide reads, in one-letter code: Probable transaldolase (221 aa).

Lys87 acts as the Schiff-base intermediate with substrate in catalysis.

This sequence belongs to the transaldolase family. Type 3B subfamily.

The protein localises to the cytoplasm. The enzyme catalyses D-sedoheptulose 7-phosphate + D-glyceraldehyde 3-phosphate = D-erythrose 4-phosphate + beta-D-fructose 6-phosphate. It functions in the pathway carbohydrate degradation; pentose phosphate pathway; D-glyceraldehyde 3-phosphate and beta-D-fructose 6-phosphate from D-ribose 5-phosphate and D-xylulose 5-phosphate (non-oxidative stage): step 2/3. Transaldolase is important for the balance of metabolites in the pentose-phosphate pathway. This is Probable transaldolase from Syntrophobacter fumaroxidans (strain DSM 10017 / MPOB).